The sequence spans 537 residues: CTP synthase (537 aa).

The interval 1–268 is amidoligase domain; the sequence is MPFKCIFLTG…ANFIGEKLKL (268 aa). A CTP-binding site is contributed by Ser-14. Residue Ser-14 participates in UTP binding. ATP is bound by residues 15–20 and Asp-72; that span reads SLGKGL. Mg(2+) is bound by residues Asp-72 and Glu-142. CTP is bound by residues 149–151, 188–193, and Lys-224; these read DIE and KSKPTQ. UTP-binding positions include 188–193 and Lys-224; that span reads KSKPTQ. The 241-residue stretch at 293–533 folds into the Glutamine amidotransferase type-1 domain; it reads KIGVVGKYVQ…IEAALVYSKD (241 aa). Gly-352 serves as a coordination point for L-glutamine. Cys-379 serves as the catalytic Nucleophile; for glutamine hydrolysis. L-glutamine is bound by residues 380–383, Glu-403, and Arg-461; that span reads LGMQ. Catalysis depends on residues His-506 and Glu-508.

The protein belongs to the CTP synthase family. In terms of assembly, homotetramer.

The enzyme catalyses UTP + L-glutamine + ATP + H2O = CTP + L-glutamate + ADP + phosphate + 2 H(+). It carries out the reaction L-glutamine + H2O = L-glutamate + NH4(+). It catalyses the reaction UTP + NH4(+) + ATP = CTP + ADP + phosphate + 2 H(+). It functions in the pathway pyrimidine metabolism; CTP biosynthesis via de novo pathway; CTP from UDP: step 2/2. With respect to regulation, allosterically activated by GTP, when glutamine is the substrate; GTP has no effect on the reaction when ammonia is the substrate. The allosteric effector GTP functions by stabilizing the protein conformation that binds the tetrahedral intermediate(s) formed during glutamine hydrolysis. Inhibited by the product CTP, via allosteric rather than competitive inhibition. Functionally, catalyzes the ATP-dependent amination of UTP to CTP with either L-glutamine or ammonia as the source of nitrogen. Regulates intracellular CTP levels through interactions with the four ribonucleotide triphosphates. In Chlamydia pneumoniae (Chlamydophila pneumoniae), this protein is CTP synthase.